The following is a 513-amino-acid chain: GMP synthase [glutamine-hydrolyzing] (513 aa).

The Glutamine amidotransferase type-1 domain occupies 9 to 198; that stretch reads LILVLDFGSQ…IREICKCTGE (190 aa). C86 (nucleophile) is an active-site residue. Residues H172 and E174 contribute to the active site. Residues 199–388 form the GMPS ATP-PPase domain; it reads WTMENFIEIE…LGIPEHLVWR (190 aa). 226-232 is an ATP binding site; the sequence is SGGVDSS.

In terms of assembly, homodimer.

It carries out the reaction XMP + L-glutamine + ATP + H2O = GMP + L-glutamate + AMP + diphosphate + 2 H(+). The protein operates within purine metabolism; GMP biosynthesis; GMP from XMP (L-Gln route): step 1/1. Functionally, catalyzes the synthesis of GMP from XMP. In Macrococcus caseolyticus (strain JCSC5402) (Macrococcoides caseolyticum), this protein is GMP synthase [glutamine-hydrolyzing].